Here is a 277-residue protein sequence, read N- to C-terminus: Undecaprenyl-diphosphatase (277 aa).

Helical transmembrane passes span 5–25, 44–64, 86–106, 110–130, 184–204, 219–239, and 255–275; these read WTAA…FLPI, RAMA…VWEF, LNLL…ADTI, LFNA…MLWA, AATE…AVYS, VFAI…RALL, and IAFG…WASA.

Belongs to the UppP family.

It localises to the cell inner membrane. It carries out the reaction di-trans,octa-cis-undecaprenyl diphosphate + H2O = di-trans,octa-cis-undecaprenyl phosphate + phosphate + H(+). Functionally, catalyzes the dephosphorylation of undecaprenyl diphosphate (UPP). Confers resistance to bacitracin. This is Undecaprenyl-diphosphatase from Pseudomonas savastanoi pv. phaseolicola (strain 1448A / Race 6) (Pseudomonas syringae pv. phaseolicola (strain 1448A / Race 6)).